A 252-amino-acid chain; its full sequence is Aspartate/glutamate leucyltransferase (252 aa).

It belongs to the R-transferase family. Bpt subfamily.

The protein resides in the cytoplasm. The catalysed reaction is N-terminal L-glutamyl-[protein] + L-leucyl-tRNA(Leu) = N-terminal L-leucyl-L-glutamyl-[protein] + tRNA(Leu) + H(+). The enzyme catalyses N-terminal L-aspartyl-[protein] + L-leucyl-tRNA(Leu) = N-terminal L-leucyl-L-aspartyl-[protein] + tRNA(Leu) + H(+). Functions in the N-end rule pathway of protein degradation where it conjugates Leu from its aminoacyl-tRNA to the N-termini of proteins containing an N-terminal aspartate or glutamate. This is Aspartate/glutamate leucyltransferase from Polynucleobacter necessarius subsp. necessarius (strain STIR1).